A 154-amino-acid chain; its full sequence is Ascorbate-specific PTS system EIIA component (154 aa).

A PTS EIIA type-2 domain is found at 6 to 150 (SLAENNSIRL…QEVLDLIDRT (145 aa)). The active-site Tele-phosphohistidine intermediate is the histidine 68. A Phosphohistidine modification is found at histidine 68.

The protein resides in the cytoplasm. Its function is as follows. The phosphoenolpyruvate-dependent sugar phosphotransferase system (sugar PTS), a major carbohydrate active transport system, catalyzes the phosphorylation of incoming sugar substrates concomitantly with their translocation across the cell membrane. The enzyme II UlaABC PTS system is involved in ascorbate transport. In Salmonella paratyphi A (strain ATCC 9150 / SARB42), this protein is Ascorbate-specific PTS system EIIA component (ulaC).